The chain runs to 252 residues: Phosphatidylserine decarboxylase proenzyme (252 aa).

The active-site Schiff-base intermediate with substrate; via pyruvic acid is the S211. Residue S211 is modified to Pyruvic acid (Ser); by autocatalysis.

The protein belongs to the phosphatidylserine decarboxylase family. PSD-A subfamily. Heterodimer of a large membrane-associated beta subunit and a small pyruvoyl-containing alpha subunit. Pyruvate serves as cofactor. Post-translationally, is synthesized initially as an inactive proenzyme. Formation of the active enzyme involves a self-maturation process in which the active site pyruvoyl group is generated from an internal serine residue via an autocatalytic post-translational modification. Two non-identical subunits are generated from the proenzyme in this reaction, and the pyruvate is formed at the N-terminus of the alpha chain, which is derived from the carboxyl end of the proenzyme. The post-translation cleavage follows an unusual pathway, termed non-hydrolytic serinolysis, in which the side chain hydroxyl group of the serine supplies its oxygen atom to form the C-terminus of the beta chain, while the remainder of the serine residue undergoes an oxidative deamination to produce ammonia and the pyruvoyl prosthetic group on the alpha chain.

It localises to the cell membrane. The catalysed reaction is a 1,2-diacyl-sn-glycero-3-phospho-L-serine + H(+) = a 1,2-diacyl-sn-glycero-3-phosphoethanolamine + CO2. It participates in phospholipid metabolism; phosphatidylethanolamine biosynthesis; phosphatidylethanolamine from CDP-diacylglycerol: step 2/2. In terms of biological role, catalyzes the formation of phosphatidylethanolamine (PtdEtn) from phosphatidylserine (PtdSer). The polypeptide is Phosphatidylserine decarboxylase proenzyme (Novosphingobium aromaticivorans (strain ATCC 700278 / DSM 12444 / CCUG 56034 / CIP 105152 / NBRC 16084 / F199)).